Reading from the N-terminus, the 459-residue chain is Glycosyl hydrolase family 109 protein 1 (459 aa).

The segment at residues 1–31 is a signal peptide (tat-type signal); sequence MHNIHRRHFLKAAGAVTAGLVTANIALNANA. Residues 64-65, Asp-86, 135-138, 155-156, and Asn-184 each bind NAD(+); these read ER, WEWH, and EV. Residues Tyr-213, Arg-232, 244–247, and Tyr-326 each bind substrate; that span reads YPTH. Tyr-244 lines the NAD(+) pocket.

Belongs to the Gfo/Idh/MocA family. Glycosyl hydrolase 109 subfamily. It depends on NAD(+) as a cofactor. Predicted to be exported by the Tat system. The position of the signal peptide cleavage has not been experimentally proven.

Functionally, glycosidase. The sequence is that of Glycosyl hydrolase family 109 protein 1 from Shewanella sp. (strain MR-7).